We begin with the raw amino-acid sequence, 826 residues long: Arf-GAP with ANK repeat and PH domain-containing protein cnt-1 (826 aa).

The PH domain occupies 275-373; that stretch reads DVMMEGYLYK…WMRALQRTIL (99 aa). In terms of domain architecture, Arf-GAP spans 447-572; that stretch reads TTAFEQVRRV…RFAVAEDTRA (126 aa). The segment at 462–485 adopts a C4-type zinc-finger fold; it reads CADCGSPAPKWVSINLGVVLCIEC. A disordered region spans residues 570 to 604; the sequence is TRARSSATNRQEHLKHKTSIGGNSSSNGVNRSSSY. Over residues 588–603 the composition is skewed to low complexity; it reads SIGGNSSSNGVNRSSS. ANK repeat units follow at residues 690–719, 723–752, and 756–789; these read NGTT…KINM, KLNT…DSNL, and DSKT…NADF.

In terms of assembly, interacts (via C-terminal ankyrin repeat) with rab-10 (GTP-bound form); the interaction is required for cnt-1 recruitment to endosomes. Interacts (via C-terminal ankyrin repeat) with rab-8 (GTP-bound form) and rab-35 (GTP-bound form). In terms of processing, cleaved by caspase ced-3 after Asp-382 and Asp-609. Cleavage at Asp-382 is required for subsequent cleavage at Asp-609.

The protein resides in the cytoplasm. Its subcellular location is the recycling endosome membrane. It is found in the basolateral cell membrane. It localises to the apical cell membrane. The protein localises to the cell membrane. GTPase-activating protein for the ADP ribosylation factor family. Regulates endosome recycling downstream of rab-10 and upstream of arf-6. Functionally, promotes apoptosis during embryonic development. Produced by caspase ced-3-mediated cleavage, and translocates to the plasma membrane where it prevents the activation of the prosurvival Akt-1/2 and sgk-1 signaling pathway by competing with Akt-1/2 for the binding to PtdIns(3,4,5)P3. The protein is Arf-GAP with ANK repeat and PH domain-containing protein cnt-1 of Caenorhabditis elegans.